We begin with the raw amino-acid sequence, 405 residues long: Tyrosine--tRNA ligase (405 aa).

The short motif at Pro-48 to His-57 is the 'HIGH' region element. Residues Lys-232–Ser-236 carry the 'KMSKS' region motif. Lys-235 is an ATP binding site. An S4 RNA-binding domain is found at Ile-343–Phe-404.

Belongs to the class-I aminoacyl-tRNA synthetase family. TyrS type 2 subfamily. As to quaternary structure, homodimer.

It localises to the cytoplasm. It catalyses the reaction tRNA(Tyr) + L-tyrosine + ATP = L-tyrosyl-tRNA(Tyr) + AMP + diphosphate + H(+). Functionally, catalyzes the attachment of tyrosine to tRNA(Tyr) in a two-step reaction: tyrosine is first activated by ATP to form Tyr-AMP and then transferred to the acceptor end of tRNA(Tyr). This chain is Tyrosine--tRNA ligase, found in Desulfotalea psychrophila (strain LSv54 / DSM 12343).